We begin with the raw amino-acid sequence, 549 residues long: DNA 3'-5' helicase XPB (549 aa).

The segment at 1 to 130 (MTDGPLIVQS…RNKKIAPMLG (130 aa)) is required for protein stability or solubility. Residues 190-344 (ADSFWAGGSG…DVFSLIGPKR (155 aa)) enclose the Helicase ATP-binding domain. Residue 203-210 (LPCGAGKT) participates in ATP binding. The DEAH box motif lies at 298 to 301 (DEVH). One can recognise a Helicase C-terminal domain in the interval 399–545 (VVKSILAKHP…YIIRDADDLL (147 aa)).

It belongs to the helicase family. RAD25/XPB subfamily. In terms of assembly, monomer. The cofactor is Mn(2+). It depends on Mg(2+) as a cofactor.

The catalysed reaction is Couples ATP hydrolysis with the unwinding of duplex DNA by translocating in the 3'-5' direction.. The enzyme catalyses ATP + H2O = ADP + phosphate + H(+). ATP-dependent 3'-5' DNA helicase, unwinds 3'-overhangs, 3'- flaps, and splayed-arm DNA substrates but not 5'-overhangs, 5'-flap substrates, 3-way junctions or Holliday junctions. Not highly efficient in vitro. Requires ATP hydrolysis for helicase activity; the ATPase activity is DNA-dependent and requires a minimum of 4 single-stranded nucleotides (nt) with 6-10 nt providing all necessary interactions for full processive unwinding. The ATPase prefers ATP over CTP or GTP, is almost inactive with TTP. DNA helicase activity requires ATP or dATP and only acts when the 3'-overhang is &gt;20 nt. Capable of unwinding a DNA:RNA hybrid if the 3'-overhang is DNA. Also catalyzes ATP-independent annealing of complementary DNA strands; annealing requires Mg(2+). In Mycobacterium tuberculosis (strain ATCC 25618 / H37Rv), this protein is DNA 3'-5' helicase XPB.